The chain runs to 542 residues: Chaperonin GroEL 2 (542 aa).

Residues 30-33 (TLGP), lysine 51, 87-91 (DGTTT), glycine 415, and aspartate 496 contribute to the ATP site.

Belongs to the chaperonin (HSP60) family. As to quaternary structure, forms a cylinder of 14 subunits composed of two heptameric rings stacked back-to-back. Interacts with the co-chaperonin GroES.

It is found in the cytoplasm. It catalyses the reaction ATP + H2O + a folded polypeptide = ADP + phosphate + an unfolded polypeptide.. Functionally, together with its co-chaperonin GroES, plays an essential role in assisting protein folding. The GroEL-GroES system forms a nano-cage that allows encapsulation of the non-native substrate proteins and provides a physical environment optimized to promote and accelerate protein folding. This Rhizobium leguminosarum protein is Chaperonin GroEL 2.